Reading from the N-terminus, the 241-residue chain is Octanoyltransferase (241 aa).

Positions 50 to 238 (KIAHEQVWLL…AFEQIFGPTI (189 aa)) constitute a BPL/LPL catalytic domain. Substrate is bound by residues 89–96 (RGGEFTYH), 169–171 (AIG), and 182–184 (GIS). Cys-200 serves as the catalytic Acyl-thioester intermediate.

The protein belongs to the LipB family.

Its subcellular location is the cytoplasm. The enzyme catalyses octanoyl-[ACP] + L-lysyl-[protein] = N(6)-octanoyl-L-lysyl-[protein] + holo-[ACP] + H(+). Its pathway is protein modification; protein lipoylation via endogenous pathway; protein N(6)-(lipoyl)lysine from octanoyl-[acyl-carrier-protein]: step 1/2. Functionally, catalyzes the transfer of endogenously produced octanoic acid from octanoyl-acyl-carrier-protein onto the lipoyl domains of lipoate-dependent enzymes. Lipoyl-ACP can also act as a substrate although octanoyl-ACP is likely to be the physiological substrate. In Bartonella bacilliformis (strain ATCC 35685 / KC583 / Herrer 020/F12,63), this protein is Octanoyltransferase.